The primary structure comprises 511 residues: Peptide transporter YePEPT (511 aa).

Residues 1–19 are Cytoplasmic-facing; it reads MQTSTNTPGGRTFFGHPYP. A helical transmembrane segment spans residues 20–45; that stretch reads LSGLFLSEMWERFSFYGIRPLLILFM. Residues 46–59 lie on the Periplasmic side of the membrane; it reads AATVFDGGMGLPRE. A helical membrane pass occupies residues 60–84; sequence QASAIVGIFAGSMYLAALPGGLLAD. Residues 85 to 88 are Cytoplasmic-facing; the sequence is NWLG. A helical membrane pass occupies residues 89-109; sequence QQRAVWYGSILIALGHLSIAL. Residues 110 to 115 lie on the Periplasmic side of the membrane; sequence SAFFGN. The helical transmembrane segment at 116 to 138 threads the bilayer; sequence DLFFIGLVFIVLGTGLFKTCISV. Topologically, residues 139-149 are cytoplasmic; it reads MVGTLYKPGDA. Residues 150 to 175 form a helical membrane-spanning segment; it reads RRDGGFSLFYMGINMGSFIAPLLSGW. At 176–181 the chain is on the periplasmic side; the sequence is LLRTHG. Residues 182-208 form a helical membrane-spanning segment; the sequence is WHWGFGIGGIGMLVALLIFRGFAIPAM. Residues 209 to 232 are Cytoplasmic-facing; the sequence is KRYDAEVGLDSSWNKPTNQRQGVG. The helical transmembrane segment at 233 to 253 threads the bilayer; sequence RWVTAIMAVVVVIIALISQGV. Topologically, residues 254-256 are periplasmic; that stretch reads IPI. Residues 257–279 traverse the membrane as a helical segment; that stretch reads NPVMIASLLVYVIAASVTLYFIY. The Cytoplasmic portion of the chain corresponds to 280–294; that stretch reads LFAFAKMSRKDRARL. The helical transmembrane segment at 295–321 threads the bilayer; it reads LVCFILLVSAAFFWSAFEQKPTSFNLF. The Periplasmic segment spans residues 322–335; that stretch reads ANDYTDRMVMGFEI. Residues 336–357 form a helical membrane-spanning segment; that stretch reads PTVWFQSINALFIILLAPVFSW. The Cytoplasmic portion of the chain corresponds to 358-369; that stretch reads AWPALAKKKIQP. The helical transmembrane segment at 370-396 threads the bilayer; that stretch reads SSITKFVIGILCAAAGFAVMMYAAQHV. The Periplasmic segment spans residues 397-405; it reads LSSGGAGVS. The chain crosses the membrane as a helical span at residues 406–426; it reads PLWLVMSILLLTLGELCLSPI. At 427 to 441 the chain is on the cytoplasmic side; the sequence is GLATMTLLAPDRMRG. Residues 442-462 form a helical membrane-spanning segment; sequence QVMGLWFCASSLGNLAAGLIG. Over 463-471 the chain is Periplasmic; the sequence is GHVKADQLD. A helical transmembrane segment spans residues 472–496; sequence MLPTLFARCSIALVICAAVLILLIV. Over 497-511 the chain is Cytoplasmic; the sequence is PIRRLMNNTQGQQTA.

The protein belongs to the major facilitator superfamily. Proton-dependent oligopeptide transporter (POT/PTR) (TC 2.A.17) family.

It localises to the cell inner membrane. Its activity is regulated as follows. Transport is inhibited by the proton ionophore carbonyl cyanide m-chlorophenylhydrazone (CCCP). Its function is as follows. Mediates the proton-dependent uptake of dipeptides. Shows higher affinity for dipeptides with a negatively charged amino acid residue at the N-terminal position, such as Asp-Ala and Glu-Ala. Also displays specificity for Ala-Ala, Ala-Tyr and Tyr-Ala. This Yersinia enterocolitica subsp. palearctica serotype O:3 (strain YE-P4) protein is Peptide transporter YePEPT.